The primary structure comprises 158 residues: Large ribosomal subunit protein uL16 (158 aa).

It belongs to the universal ribosomal protein uL16 family. In terms of assembly, part of the 50S ribosomal subunit.

In terms of biological role, binds 23S rRNA and is also seen to make contacts with the A and possibly P site tRNAs. This Prochlorococcus marinus (strain MIT 9303) protein is Large ribosomal subunit protein uL16.